The following is a 439-amino-acid chain: D-inositol 3-phosphate glycosyltransferase (439 aa).

Residue H21 coordinates 1D-myo-inositol 3-phosphate. UDP-N-acetyl-alpha-D-glucosamine-binding positions include 27–28 (QP) and G35. Residues 32 to 37 (DAGGMN), K90, Y123, T147, and R167 contribute to the 1D-myo-inositol 3-phosphate site. Residues R241, K246, and Q299 each coordinate UDP-N-acetyl-alpha-D-glucosamine. Positions 308, 309, and 311 each coordinate Mg(2+). Residues E321 and E329 each contribute to the UDP-N-acetyl-alpha-D-glucosamine site. T335 is a binding site for Mg(2+).

It belongs to the glycosyltransferase group 1 family. MshA subfamily. In terms of assembly, homodimer.

The enzyme catalyses 1D-myo-inositol 3-phosphate + UDP-N-acetyl-alpha-D-glucosamine = 1D-myo-inositol 2-acetamido-2-deoxy-alpha-D-glucopyranoside 3-phosphate + UDP + H(+). Its function is as follows. Catalyzes the transfer of a N-acetyl-glucosamine moiety to 1D-myo-inositol 3-phosphate to produce 1D-myo-inositol 2-acetamido-2-deoxy-glucopyranoside 3-phosphate in the mycothiol biosynthesis pathway. This Mycobacterium sp. (strain JLS) protein is D-inositol 3-phosphate glycosyltransferase.